The chain runs to 780 residues: Putative ABC transporter ATP-binding protein BL0043 (780 aa).

ABC transporter domains lie at 2 to 238 and 282 to 531; these read LKDI…QSET and IRVS…GPAH. 34-41 contributes to the ATP binding site; that stretch reads GPNGSGKS. Positions 230–272 are disordered; it reads AEAVSQSETEGSIGTEAAPSRPTNDSPRQREREDGSELPLLSD. 316–323 is an ATP binding site; the sequence is GVNGSGKS. The next 4 membrane-spanning stretches (helical) occupy residues 551-573, 586-608, 623-645, and 759-778; these read FTMF…LAVI, SIHP…VRTG, GVTI…AVFL, and IAAR…AAII.

Belongs to the ABC transporter superfamily.

The protein localises to the cell membrane. Probably part of an ABC transporter complex. Responsible for energy coupling to the transport system. This Bifidobacterium longum (strain NCC 2705) protein is Putative ABC transporter ATP-binding protein BL0043.